The chain runs to 69 residues: uncharacterized protein (69 aa).

Residues 1-19 (MKRIWVSLMIAITACSAHA) form the signal peptide.

This is an uncharacterized protein from Pasteurella multocida (strain Pm70).